Here is a 205-residue protein sequence, read N- to C-terminus: NAD(P)H dehydrogenase (quinone) (205 aa).

In terms of domain architecture, Flavodoxin-like spans 3–194 (VLVVYYSMYG…AAARYQGKHV (192 aa)). Residues 9-14 (SMYGHI) and 82-84 (TRF) contribute to the FMN site. Tyrosine 11 contributes to the NAD(+) binding site. Tryptophan 102 lines the substrate pocket. Histidine 138 is a binding site for FMN.

The protein belongs to the WrbA family. Requires FMN as cofactor.

The catalysed reaction is a quinone + NADH + H(+) = a quinol + NAD(+). The enzyme catalyses a quinone + NADPH + H(+) = a quinol + NADP(+). This chain is NAD(P)H dehydrogenase (quinone), found in Geotalea daltonii (strain DSM 22248 / JCM 15807 / FRC-32) (Geobacter daltonii).